The chain runs to 345 residues: UDP-3-O-acylglucosamine N-acyltransferase (345 aa).

His253 functions as the Proton acceptor in the catalytic mechanism.

The protein belongs to the transferase hexapeptide repeat family. LpxD subfamily. Homotrimer.

The catalysed reaction is a UDP-3-O-[(3R)-3-hydroxyacyl]-alpha-D-glucosamine + a (3R)-hydroxyacyl-[ACP] = a UDP-2-N,3-O-bis[(3R)-3-hydroxyacyl]-alpha-D-glucosamine + holo-[ACP] + H(+). Its pathway is bacterial outer membrane biogenesis; LPS lipid A biosynthesis. Catalyzes the N-acylation of UDP-3-O-acylglucosamine using 3-hydroxyacyl-ACP as the acyl donor. Is involved in the biosynthesis of lipid A, a phosphorylated glycolipid that anchors the lipopolysaccharide to the outer membrane of the cell. The protein is UDP-3-O-acylglucosamine N-acyltransferase of Rickettsia massiliae (strain Mtu5).